The chain runs to 250 residues: Glycerol uptake facilitator protein-like 5 (250 aa).

Transmembrane regions (helical) follow at residues 12 to 32 (EFFG…NAFL) and 46 to 66 (GGWL…AMMF). Residues 75–77 (NPA) carry the NPA 1 motif. 3 helical membrane-spanning segments follow: residues 85–105 (IGIF…LGAI), 142–162 (LNGF…AMGL), and 172–192 (IDIA…SLGG). The short motif at 199-201 (NPA) is the NPA 2 element. The helical transmembrane segment at 230–250 (VVAPIVGAVIGIWIYKIFFGL) threads the bilayer.

The protein belongs to the MIP/aquaporin (TC 1.A.8) family.

The protein localises to the cell membrane. Its function is as follows. Probable transporter that facilitates the transmembrane diffusion of an unknown substrate. Is not permeable to water, dihydroxyacetone, glycerol, urea, H(2)O(2) and D/L-lactic acid. The sequence is that of Glycerol uptake facilitator protein-like 5 from Lactiplantibacillus plantarum (strain ATCC BAA-793 / NCIMB 8826 / WCFS1) (Lactobacillus plantarum).